Consider the following 552-residue polypeptide: CTP synthase (552 aa).

Positions 1 to 270 (MTKYVFVTGG…DRIICDELKL (270 aa)) are amidoligase domain. Serine 13 is a binding site for CTP. Serine 13 contributes to the UTP binding site. Residues 14-19 (SLGKGI) and aspartate 71 each bind ATP. Residues aspartate 71 and glutamate 144 each coordinate Mg(2+). CTP-binding positions include 151 to 153 (DIE), 191 to 196 (KTKPTQ), and lysine 227. Residues 191-196 (KTKPTQ) and lysine 227 contribute to the UTP site. Residues 295–547 (TIGMVGKYVD…VEAALANKQA (253 aa)) form the Glutamine amidotransferase type-1 domain. Glycine 356 provides a ligand contact to L-glutamine. Cysteine 383 (nucleophile; for glutamine hydrolysis) is an active-site residue. Residues 384-387 (LGMQ), glutamate 407, and arginine 473 contribute to the L-glutamine site. Active-site residues include histidine 520 and glutamate 522.

This sequence belongs to the CTP synthase family. As to quaternary structure, homotetramer.

It catalyses the reaction UTP + L-glutamine + ATP + H2O = CTP + L-glutamate + ADP + phosphate + 2 H(+). The catalysed reaction is L-glutamine + H2O = L-glutamate + NH4(+). The enzyme catalyses UTP + NH4(+) + ATP = CTP + ADP + phosphate + 2 H(+). The protein operates within pyrimidine metabolism; CTP biosynthesis via de novo pathway; CTP from UDP: step 2/2. Its activity is regulated as follows. Allosterically activated by GTP, when glutamine is the substrate; GTP has no effect on the reaction when ammonia is the substrate. The allosteric effector GTP functions by stabilizing the protein conformation that binds the tetrahedral intermediate(s) formed during glutamine hydrolysis. Inhibited by the product CTP, via allosteric rather than competitive inhibition. In terms of biological role, catalyzes the ATP-dependent amination of UTP to CTP with either L-glutamine or ammonia as the source of nitrogen. Regulates intracellular CTP levels through interactions with the four ribonucleotide triphosphates. In Burkholderia vietnamiensis (strain G4 / LMG 22486) (Burkholderia cepacia (strain R1808)), this protein is CTP synthase.